We begin with the raw amino-acid sequence, 498 residues long: Lysine--tRNA ligase (498 aa).

Residues Glu-407 and Glu-414 each contribute to the Mg(2+) site.

This sequence belongs to the class-II aminoacyl-tRNA synthetase family. As to quaternary structure, homodimer. It depends on Mg(2+) as a cofactor.

Its subcellular location is the cytoplasm. The enzyme catalyses tRNA(Lys) + L-lysine + ATP = L-lysyl-tRNA(Lys) + AMP + diphosphate. This chain is Lysine--tRNA ligase (lysS), found in Rhizobium meliloti (strain 1021) (Ensifer meliloti).